A 353-amino-acid polypeptide reads, in one-letter code: Phosphoribosylformylglycinamidine cyclo-ligase (353 aa).

Belongs to the AIR synthase family.

Its subcellular location is the cytoplasm. The enzyme catalyses 2-formamido-N(1)-(5-O-phospho-beta-D-ribosyl)acetamidine + ATP = 5-amino-1-(5-phospho-beta-D-ribosyl)imidazole + ADP + phosphate + H(+). The protein operates within purine metabolism; IMP biosynthesis via de novo pathway; 5-amino-1-(5-phospho-D-ribosyl)imidazole from N(2)-formyl-N(1)-(5-phospho-D-ribosyl)glycinamide: step 2/2. The sequence is that of Phosphoribosylformylglycinamidine cyclo-ligase from Magnetococcus marinus (strain ATCC BAA-1437 / JCM 17883 / MC-1).